We begin with the raw amino-acid sequence, 516 residues long: Probable fucosyltransferase 8 (516 aa).

The helical; Signal-anchor for type II membrane protein transmembrane segment at 5 to 25 (ITVVTCLFLLSVMQLSFFNIF) threads the bilayer. Residues 26–516 (NYQLLDATTN…ITGLKLVDSN (491 aa)) lie on the Lumenal side of the membrane. N-linked (GlcNAc...) asparagine glycosylation is found at N35, N116, N211, N362, and N463.

Belongs to the glycosyltransferase 37 family. In terms of tissue distribution, expressed in leaves and stems.

The protein resides in the golgi apparatus. It localises to the golgi stack membrane. It participates in protein modification; protein glycosylation. Its function is as follows. May be involved in cell wall biosynthesis. May act as a fucosyltransferase. The sequence is that of Probable fucosyltransferase 8 (FUT8) from Arabidopsis thaliana (Mouse-ear cress).